A 373-amino-acid polypeptide reads, in one-letter code: Queuine tRNA-ribosyltransferase (373 aa).

Catalysis depends on D89, which acts as the Proton acceptor. Substrate-binding positions include 89-93 (DSGGF), D143, Q185, and G212. The RNA binding stretch occupies residues 243-249 (GVGRPED). The active-site Nucleophile is the D262. An RNA binding; important for wobble base 34 recognition region spans residues 267–271 (TRNAR). Zn(2+) is bound by residues C300, C302, C305, and H331.

The protein belongs to the queuine tRNA-ribosyltransferase family. Homodimer. Within each dimer, one monomer is responsible for RNA recognition and catalysis, while the other monomer binds to the replacement base PreQ1. The cofactor is Zn(2+).

The enzyme catalyses 7-aminomethyl-7-carbaguanine + guanosine(34) in tRNA = 7-aminomethyl-7-carbaguanosine(34) in tRNA + guanine. It functions in the pathway tRNA modification; tRNA-queuosine biosynthesis. Functionally, catalyzes the base-exchange of a guanine (G) residue with the queuine precursor 7-aminomethyl-7-deazaguanine (PreQ1) at position 34 (anticodon wobble position) in tRNAs with GU(N) anticodons (tRNA-Asp, -Asn, -His and -Tyr). Catalysis occurs through a double-displacement mechanism. The nucleophile active site attacks the C1' of nucleotide 34 to detach the guanine base from the RNA, forming a covalent enzyme-RNA intermediate. The proton acceptor active site deprotonates the incoming PreQ1, allowing a nucleophilic attack on the C1' of the ribose to form the product. After dissociation, two additional enzymatic reactions on the tRNA convert PreQ1 to queuine (Q), resulting in the hypermodified nucleoside queuosine (7-(((4,5-cis-dihydroxy-2-cyclopenten-1-yl)amino)methyl)-7-deazaguanosine). The protein is Queuine tRNA-ribosyltransferase of Marinobacter nauticus (strain ATCC 700491 / DSM 11845 / VT8) (Marinobacter aquaeolei).